The sequence spans 487 residues: 3-octaprenyl-4-hydroxybenzoate carboxy-lyase (487 aa).

Position 172 (N172) interacts with Mn(2+). Prenylated FMN contacts are provided by residues I175 to R177, R189 to L191, and R194 to G195. E238 lines the Mn(2+) pocket. The Proton donor role is filled by D287.

Belongs to the UbiD family. Homohexamer. Requires prenylated FMN as cofactor. Mn(2+) is required as a cofactor.

The protein resides in the cell membrane. The enzyme catalyses a 4-hydroxy-3-(all-trans-polyprenyl)benzoate + H(+) = a 2-(all-trans-polyprenyl)phenol + CO2. It functions in the pathway cofactor biosynthesis; ubiquinone biosynthesis. Catalyzes the decarboxylation of 3-octaprenyl-4-hydroxy benzoate to 2-octaprenylphenol, an intermediate step in ubiquinone biosynthesis. This Nitrosomonas eutropha (strain DSM 101675 / C91 / Nm57) protein is 3-octaprenyl-4-hydroxybenzoate carboxy-lyase.